A 355-amino-acid polypeptide reads, in one-letter code: Daphnetin O-methyltransferase 1 (355 aa).

3 residues coordinate S-adenosyl-L-homocysteine: aspartate 222, aspartate 242, and lysine 256. Histidine 260 functions as the Proton acceptor in the catalytic mechanism.

It belongs to the class I-like SAM-binding methyltransferase superfamily. Cation-independent O-methyltransferase family. COMT subfamily.

It carries out the reaction 7,8-dihydroxycoumarin + S-adenosyl-L-methionine = 7-hydroxy-8-methoxycoumarin + S-adenosyl-L-homocysteine + H(+). It functions in the pathway aromatic compound metabolism. It participates in secondary metabolite biosynthesis. O-methyltransferase involved in the biosynthesis of coumarins natural products such as daphnetin derivatives. Catalyzes specifically the methylation of daphnetin (7,8-dihydroxycoumarin) to produce hydrangetin (7-hydroxy-8-methoxycoumarin). Probably involved in acclimation to low temperature conditions. This Secale cereale (Rye) protein is Daphnetin O-methyltransferase 1.